The sequence spans 733 residues: Protein PAT1 homolog 2 (733 aa).

Disordered regions lie at residues 42–75 (LDQE…PEAL) and 337–366 (LHPQ…PDPY). A compositionally biased stretch (basic and acidic residues) spans 49–59 (EPVKLEDDHTK). Low complexity predominate over residues 346 to 356 (SQRQRPQSSSR).

This sequence belongs to the PAT1 family. As to quaternary structure, interacts with ribonucleoprotein complex components. Interacts with cpeb. In terms of tissue distribution, oocyte-specific protein. Expressed throughout oogenesis but is not detectable in eggs, embryos, nor in adult tissues (at protein level).

It is found in the cytoplasm. The protein resides in the nucleus. In terms of biological role, RNA-binding protein that acts as a translational repressor. When overexpressed, able to disperse P-bodies. The sequence is that of Protein PAT1 homolog 2 (patl2) from Xenopus laevis (African clawed frog).